We begin with the raw amino-acid sequence, 99 residues long: DNA-directed RNA polymerase subunit omega (99 aa).

Residues 55 to 99 (EAGTVISDPNPEEKRERLRIEREERKRQREQEQKELENRLRDEKN) form a disordered region. Residues 65–99 (PEEKRERLRIEREERKRQREQEQKELENRLRDEKN) show a composition bias toward basic and acidic residues.

Belongs to the RNA polymerase subunit omega family. As to quaternary structure, the RNAP catalytic core consists of 2 alpha, 1 beta, 1 beta' and 1 omega subunit. When a sigma factor is associated with the core the holoenzyme is formed, which can initiate transcription.

The enzyme catalyses RNA(n) + a ribonucleoside 5'-triphosphate = RNA(n+1) + diphosphate. Its function is as follows. Promotes RNA polymerase assembly. Latches the N- and C-terminal regions of the beta' subunit thereby facilitating its interaction with the beta and alpha subunits. In Enterococcus faecalis (strain ATCC 700802 / V583), this protein is DNA-directed RNA polymerase subunit omega.